The sequence spans 41 residues: Photosystem II reaction center protein L (41 aa).

The chain crosses the membrane as a helical span at residues 20 to 40; the sequence is SLYWGLLLIFVLAVPFSNYFF.

It belongs to the PsbL family. In terms of assembly, PSII is composed of 1 copy each of membrane proteins PsbA, PsbB, PsbC, PsbD, PsbE, PsbF, PsbH, PsbI, PsbJ, PsbK, PsbL, PsbM, PsbT, PsbX, PsbY, PsbZ, Psb30/Ycf12, at least 3 peripheral proteins of the oxygen-evolving complex and a large number of cofactors. It forms dimeric complexes.

It is found in the plastid. The protein resides in the chloroplast thylakoid membrane. Functionally, one of the components of the core complex of photosystem II (PSII). PSII is a light-driven water:plastoquinone oxidoreductase that uses light energy to abstract electrons from H(2)O, generating O(2) and a proton gradient subsequently used for ATP formation. It consists of a core antenna complex that captures photons, and an electron transfer chain that converts photonic excitation into a charge separation. This subunit is found at the monomer-monomer interface and is required for correct PSII assembly and/or dimerization. This is Photosystem II reaction center protein L from Pinus koraiensis (Korean pine).